The following is a 326-amino-acid chain: Isoaspartyl peptidase/L-asparaginase (326 aa).

T185 acts as the Nucleophile in catalysis. Substrate contacts are provided by residues 213-216 and 236-239; these read RVGD and TGHG.

Belongs to the Ntn-hydrolase family. Heterodimer of an alpha and beta chain produced by autocleavage. This heterodimer may then dimerize in turn, giving rise to a heterotetramer. Cleaved into an alpha and beta chain by autocatalysis; this activates the enzyme. The N-terminal residue of the beta subunit is responsible for the nucleophile hydrolase activity. As to expression, high expression in the heart and brain while low to minimal expression in the other tissues. In ocular tissues, high levels is observed in the optic nerve and retina while relatively low levels of expression are detected in the iris-ciliary body, lens or retinal pigment epithelium.

Its subcellular location is the cytoplasm. The catalysed reaction is L-asparagine + H2O = L-aspartate + NH4(+). It carries out the reaction Cleavage of a beta-linked Asp residue from the N-terminus of a polypeptide.. Its function is as follows. Has both L-asparaginase and beta-aspartyl peptidase activity. May be involved in the production of L-aspartate, which can act as an excitatory neurotransmitter in some brain regions. Is highly active with L-Asp beta-methyl ester. Besides, has catalytic activity toward beta-aspartyl dipeptides and their methyl esters, including beta-L-Asp-L-Phe, beta-L-Asp-L-Phe methyl ester (aspartame), beta-L-Asp-L-Ala, beta-L-Asp-L-Leu and beta-L-Asp-L-Lys. Does not have aspartylglucosaminidase activity and is inactive toward GlcNAc-L-Asn. Likewise, has no activity toward glutamine. The protein is Isoaspartyl peptidase/L-asparaginase (Asrgl1) of Mus musculus (Mouse).